The following is a 219-amino-acid chain: Deoxyribose-phosphate aldolase (219 aa).

The active-site Proton donor/acceptor is Asp89. Lys151 serves as the catalytic Schiff-base intermediate with acetaldehyde. Residue Lys180 is the Proton donor/acceptor of the active site.

The protein belongs to the DeoC/FbaB aldolase family. DeoC type 1 subfamily.

Its subcellular location is the cytoplasm. It carries out the reaction 2-deoxy-D-ribose 5-phosphate = D-glyceraldehyde 3-phosphate + acetaldehyde. Its pathway is carbohydrate degradation; 2-deoxy-D-ribose 1-phosphate degradation; D-glyceraldehyde 3-phosphate and acetaldehyde from 2-deoxy-alpha-D-ribose 1-phosphate: step 2/2. Functionally, catalyzes a reversible aldol reaction between acetaldehyde and D-glyceraldehyde 3-phosphate to generate 2-deoxy-D-ribose 5-phosphate. The protein is Deoxyribose-phosphate aldolase of Clostridioides difficile (strain 630) (Peptoclostridium difficile).